The chain runs to 296 residues: Nucleotide-binding protein M28_Spy0517 (296 aa).

13 to 20 (GMSGAGKT) is an ATP binding site. A GTP-binding site is contributed by 63–66 (DMRS).

It belongs to the RapZ-like family.

Its function is as follows. Displays ATPase and GTPase activities. The chain is Nucleotide-binding protein M28_Spy0517 from Streptococcus pyogenes serotype M28 (strain MGAS6180).